We begin with the raw amino-acid sequence, 361 residues long: UDP-3-O-acylglucosamine N-acyltransferase (361 aa).

His253 (proton acceptor) is an active-site residue.

It belongs to the transferase hexapeptide repeat family. LpxD subfamily. In terms of assembly, homotrimer.

It carries out the reaction a UDP-3-O-[(3R)-3-hydroxyacyl]-alpha-D-glucosamine + a (3R)-hydroxyacyl-[ACP] = a UDP-2-N,3-O-bis[(3R)-3-hydroxyacyl]-alpha-D-glucosamine + holo-[ACP] + H(+). Its pathway is bacterial outer membrane biogenesis; LPS lipid A biosynthesis. Its function is as follows. Catalyzes the N-acylation of UDP-3-O-acylglucosamine using 3-hydroxyacyl-ACP as the acyl donor. Is involved in the biosynthesis of lipid A, a phosphorylated glycolipid that anchors the lipopolysaccharide to the outer membrane of the cell. The sequence is that of UDP-3-O-acylglucosamine N-acyltransferase from Burkholderia thailandensis (strain ATCC 700388 / DSM 13276 / CCUG 48851 / CIP 106301 / E264).